A 658-amino-acid chain; its full sequence is Threonine--tRNA ligase (658 aa).

Residues 1–61 (MSDVRVTVQR…AAGDVVEPIT (61 aa)) form the TGS domain. The tract at residues 259 to 554 (DHRRLGAELD…LLEHYAGALP (296 aa)) is catalytic. Residues Cys-353, His-404, and His-531 each coordinate Zn(2+).

It belongs to the class-II aminoacyl-tRNA synthetase family. In terms of assembly, homodimer. The cofactor is Zn(2+).

The protein resides in the cytoplasm. It catalyses the reaction tRNA(Thr) + L-threonine + ATP = L-threonyl-tRNA(Thr) + AMP + diphosphate + H(+). In terms of biological role, catalyzes the attachment of threonine to tRNA(Thr) in a two-step reaction: L-threonine is first activated by ATP to form Thr-AMP and then transferred to the acceptor end of tRNA(Thr). Also edits incorrectly charged L-seryl-tRNA(Thr). In Parafrankia sp. (strain EAN1pec), this protein is Threonine--tRNA ligase.